The chain runs to 145 residues: NADH-ubiquinone oxidoreductase subunit 8 (145 aa).

2 4Fe-4S ferredoxin-type domains span residues 43 to 73 (LRFY…VRVG) and 83 to 112 (DWFT…HSLF). Positions 53, 56, 59, 63, 92, 95, 98, and 102 each coordinate [4Fe-4S] cluster.

This sequence belongs to the complex I 23 kDa subunit family. [4Fe-4S] cluster is required as a cofactor.

The protein resides in the mitochondrion. The enzyme catalyses a ubiquinone + NADH + 5 H(+)(in) = a ubiquinol + NAD(+) + 4 H(+)(out). In terms of biological role, core subunit of the mitochondrial membrane respiratory chain NADH dehydrogenase (Complex I) that is believed to belong to the minimal assembly required for catalysis. Complex I functions in the transfer of electrons from NADH to the respiratory chain. The immediate electron acceptor for the enzyme is believed to be ubiquinone. May donate electrons to ubiquinone. The chain is NADH-ubiquinone oxidoreductase subunit 8 (M-ISP1) from Trypanosoma brucei brucei.